We begin with the raw amino-acid sequence, 277 residues long: Large ribosomal subunit protein uL2 (277 aa).

Disordered stretches follow at residues 1–55 (MGIR…RHQG) and 217–277 (KRPS…KKKR). A compositionally biased stretch (basic residues) spans 37–55 (LHSKGGRNGHGRITARHQG).

This sequence belongs to the universal ribosomal protein uL2 family. In terms of assembly, part of the 50S ribosomal subunit. Forms a bridge to the 30S subunit in the 70S ribosome.

In terms of biological role, one of the primary rRNA binding proteins. Required for association of the 30S and 50S subunits to form the 70S ribosome, for tRNA binding and peptide bond formation. It has been suggested to have peptidyltransferase activity; this is somewhat controversial. Makes several contacts with the 16S rRNA in the 70S ribosome. In Thermobifida fusca (strain YX), this protein is Large ribosomal subunit protein uL2.